We begin with the raw amino-acid sequence, 292 residues long: Elongation factor Ts (292 aa).

Residues 79–82 (TDFV) form an involved in Mg(2+) ion dislocation from EF-Tu region.

Belongs to the EF-Ts family.

It localises to the cytoplasm. Functionally, associates with the EF-Tu.GDP complex and induces the exchange of GDP to GTP. It remains bound to the aminoacyl-tRNA.EF-Tu.GTP complex up to the GTP hydrolysis stage on the ribosome. The chain is Elongation factor Ts from Xanthomonas euvesicatoria pv. vesicatoria (strain 85-10) (Xanthomonas campestris pv. vesicatoria).